Here is a 226-residue protein sequence, read N- to C-terminus: 2-C-methyl-D-erythritol 4-phosphate cytidylyltransferase (226 aa).

This sequence belongs to the IspD/TarI cytidylyltransferase family. IspD subfamily.

It carries out the reaction 2-C-methyl-D-erythritol 4-phosphate + CTP + H(+) = 4-CDP-2-C-methyl-D-erythritol + diphosphate. It functions in the pathway isoprenoid biosynthesis; isopentenyl diphosphate biosynthesis via DXP pathway; isopentenyl diphosphate from 1-deoxy-D-xylulose 5-phosphate: step 2/6. Its function is as follows. Catalyzes the formation of 4-diphosphocytidyl-2-C-methyl-D-erythritol from CTP and 2-C-methyl-D-erythritol 4-phosphate (MEP). In Bacillus mycoides (strain KBAB4) (Bacillus weihenstephanensis), this protein is 2-C-methyl-D-erythritol 4-phosphate cytidylyltransferase.